Consider the following 162-residue polypeptide: Ribose-5-phosphate isomerase B (162 aa).

D-ribulose 5-phosphate-binding positions include 11–12 (DH) and 70–74 (GSGNG). The Proton acceptor role is filled by glutamate 75. Histidine 102 serves as the catalytic Proton donor. Positions 103, 113, 137, and 141 each coordinate D-ribulose 5-phosphate.

It belongs to the LacAB/RpiB family. In terms of assembly, homodimer.

The catalysed reaction is aldehydo-D-ribose 5-phosphate = D-ribulose 5-phosphate. It participates in carbohydrate degradation; pentose phosphate pathway; D-ribose 5-phosphate from D-ribulose 5-phosphate (non-oxidative stage): step 1/1. Its function is as follows. Catalyzes the interconversion of ribulose-5-P and ribose-5-P. The chain is Ribose-5-phosphate isomerase B from Mycobacterium bovis (strain ATCC BAA-935 / AF2122/97).